A 92-amino-acid chain; its full sequence is Small ribosomal subunit protein uS19c (92 aa).

Belongs to the universal ribosomal protein uS19 family.

The protein resides in the plastid. It localises to the chloroplast. Protein S19 forms a complex with S13 that binds strongly to the 16S ribosomal RNA. This Nicotiana tomentosiformis (Tobacco) protein is Small ribosomal subunit protein uS19c.